The chain runs to 284 residues: Pseudopaline exporter CntI (284 aa).

10 helical membrane passes run 2-22, 34-54, 74-94, 96-116, 122-142, 147-167, 179-199, 209-229, 236-256, and 259-279; these read VLDL…TFSV, LPAA…IYLL, GVMG…IPLA, ASIL…LFLG, AVYW…KPFS, SVYA…SVAI, IVFY…WSDF, GLLL…TRAF, IVAV…WLFW, and VPDA…IALS. EamA domains follow at residues 8 to 138 and 151 to 279; these read SGVL…LMIV and VVGL…IALS.

This sequence belongs to the EamA transporter family.

It localises to the cell inner membrane. In terms of biological role, transports the metallophore pseudopaline, which is involved in the acquisition of nickel and zinc, and thus enables bacterial growth inside the host, where metal access is limited. Is probably involved in the export of pseudopaline. The chain is Pseudopaline exporter CntI from Pseudomonas aeruginosa (strain UCBPP-PA14).